The primary structure comprises 418 residues: MHIFDELKERGLIFQTTDEEALRQELEEGQVSYYTGYDPTADSLHLGHLVAILTSRRLQLAGHKPYALVGGATGLIGDPSFKDAERSLQTKETVEGWVKSIQGQLAGLLDFENGQNKAEMVNNYDWFSDISFIDFLRDVGKYFTVNYMMSKESVKKRIETGISYTEFAYQIMQGYDFFILNQKHGVTLQIGGSDQWGNMTAGTELLRRKADKTGHVITVPLITDASGKKFGKSEGNAVWLNADKTSPYEMYQFWMNVMDDDAVRFLKIFTFLSLDEIEEIRKQFEAAPHERLAQKILAREVVTLVHGEKAYQEALNITEQLFAGNIKNLSVKELKQGLRGVPNYQVQAEDNLNIVDLLVTAGVVNSKRQAREDVQNGAIYVNGDRIQDLDYTLSDADKLENELTVIRRGKKKYFVLTY.

Y34 serves as a coordination point for L-tyrosine. A 'HIGH' region motif is present at residues 39-48 (PTADSLHLGH). L-tyrosine-binding residues include Y169 and Q173. The 'KMSKS' region motif lies at 229–233 (KFGKS). K232 is an ATP binding site. The 67-residue stretch at 352-418 (LNIVDLLVTA…GKKKYFVLTY (67 aa)) folds into the S4 RNA-binding domain.

It belongs to the class-I aminoacyl-tRNA synthetase family. TyrS type 1 subfamily. In terms of assembly, homodimer.

It is found in the cytoplasm. It catalyses the reaction tRNA(Tyr) + L-tyrosine + ATP = L-tyrosyl-tRNA(Tyr) + AMP + diphosphate + H(+). Its function is as follows. Catalyzes the attachment of tyrosine to tRNA(Tyr) in a two-step reaction: tyrosine is first activated by ATP to form Tyr-AMP and then transferred to the acceptor end of tRNA(Tyr). The protein is Tyrosine--tRNA ligase of Streptococcus gordonii (strain Challis / ATCC 35105 / BCRC 15272 / CH1 / DL1 / V288).